Consider the following 771-residue polypeptide: Dol-P-Glc:Glc(2)Man(9)GlcNAc(2)-PP-Dol alpha-1,2-glucosyltransferase (771 aa).

A run of 7 helical transmembrane segments spans residues 45–65 (FITA…LALV), 160–180 (VSFY…IFFF), 182–202 (GLYY…WNHL), 221–241 (VVLG…VVVY), 293–313 (VDMA…IAAL), 326–346 (HITI…VVLG), and 357–377 (LPQM…LLIP). The tract at residues 392 to 449 (TPTPSHTTTKDPGRSSWRFTKPSITSKKSSTTKPPQRSGPTPASSSSSSSSFSPDTNS) is disordered. 2 stretches are compositionally biased toward low complexity: residues 411–426 (TKPS…TKPP) and 435–449 (SSSS…DTNS). N-linked (GlcNAc...) asparagine glycosylation occurs at asparagine 448. A run of 2 helical transmembrane segments spans residues 469 to 489 (PFYL…NTII) and 503 to 525 (YIFR…AYTL). Basic and acidic residues predominate over residues 584 to 593 (QKNIKDKQKE). A disordered region spans residues 584-605 (QKNIKDKQKEVEEEEEEEEKED). Residues 594–604 (VEEEEEEEEKE) are compositionally biased toward acidic residues. Transmembrane regions (helical) follow at residues 631–651 (TSTV…APLV) and 656–676 (FILP…SSSL). The segment at 682 to 708 (SSSFASSTTESGNGDGNDAATAARQQQ) is disordered. Residues 728-748 (LALETVWFLAINIGTMYMFLF) form a helical membrane-spanning segment.

This sequence belongs to the ALG10 glucosyltransferase family.

It localises to the endoplasmic reticulum membrane. It catalyses the reaction an alpha-D-Glc-(1-&gt;3)-alpha-D-Glc-(1-&gt;3)-alpha-D-Man-(1-&gt;2)-alpha-D-Man-(1-&gt;2)-alpha-D-Man-(1-&gt;3)-[alpha-D-Man-(1-&gt;2)-alpha-D-Man-(1-&gt;3)-[alpha-D-Man-(1-&gt;2)-alpha-D-Man-(1-&gt;6)]-alpha-D-Man-(1-&gt;6)]-beta-D-Man-(1-&gt;4)-beta-D-GlcNAc-(1-&gt;4)-alpha-D-GlcNAc-diphospho-di-trans,poly-cis-dolichol + a di-trans,poly-cis-dolichyl beta-D-glucosyl phosphate = a alpha-D-Glc-(1-&gt;2)-alpha-D-Glc-(1-&gt;3)-alpha-D-Glc-(1-&gt;3)-alpha-D-Man-(1-&gt;2)-alpha-D-Man-(1-&gt;2)-alpha-D-Man-(1-&gt;3)-[alpha-D-Man-(1-&gt;2)-alpha-D-Man-(1-&gt;3)-[alpha-D-Man-(1-&gt;2)-alpha-D-Man-(1-&gt;6)]-alpha-D-Man-(1-&gt;6)]-beta-D-Man-(1-&gt;4)-beta-D-GlcNAc-(1-&gt;4)-alpha-D-GlcNAc-diphospho-di-trans,poly-cis-dolichol + a di-trans,poly-cis-dolichyl phosphate + H(+). Its pathway is protein modification; protein glycosylation. In terms of biological role, dol-P-Glc:Glc(2)Man(9)GlcNAc(2)-PP-Dol alpha-1,2-glucosyltransferase that operates in the biosynthetic pathway of dolichol-linked oligosaccharides, the glycan precursors employed in protein asparagine (N)-glycosylation. The assembly of dolichol-linked oligosaccharides begins on the cytosolic side of the endoplasmic reticulum membrane and finishes in its lumen. The sequential addition of sugars to dolichol pyrophosphate produces dolichol-linked oligosaccharides containing fourteen sugars, including two GlcNAcs, nine mannoses and three glucoses. Once assembled, the oligosaccharide is transferred from the lipid to nascent proteins by oligosaccharyltransferases. In the lumen of the endoplasmic reticulum, adds the third and last glucose residue from dolichyl phosphate glucose (Dol-P-Glc) onto the lipid-linked oligosaccharide intermediate Glc(2)Man(9)GlcNAc(2)-PP-Dol to produce Glc(3)Man(9)GlcNAc(2)-PP-Dol. This Neurospora crassa (strain ATCC 24698 / 74-OR23-1A / CBS 708.71 / DSM 1257 / FGSC 987) protein is Dol-P-Glc:Glc(2)Man(9)GlcNAc(2)-PP-Dol alpha-1,2-glucosyltransferase (alg-10).